A 577-amino-acid polypeptide reads, in one-letter code: Torulene dioxygenase (577 aa).

Residues H239, H291, H361, and H570 each contribute to the Fe(2+) site.

It belongs to the carotenoid oxygenase family. Fe(2+) serves as cofactor.

It is found in the cytoplasm. Its subcellular location is the cytosol. The enzyme catalyses torulene + O2 = 4'-apo-beta-carotenal + 3-methyl-2-butenal. It functions in the pathway carotenoid biosynthesis. In terms of biological role, torulene dioxygenase; part of the pathway that mediates the biosynthesis of neurosporaxanthin, a carboxylic apocarotenoid acting as an essential protective pigments and leading to orange pigmentation. CarT mediates the cleavage of torulene into beta-apo-4'-carotenal, the aldehyde corresponding to the acidic neurosporaxanthin. Is also active on other monocyclic synthetic substrates such as beta-apo-8'-carotenal and beta-apo-10'-carotenal to produce beta-apo-14'-carotenal and retinal(beta-apo-15'-carotenal), respectively. Neurosporaxanthin is synthesized from geranyl-geranyl pyrophosphate (GGPP) through several enzymatic activities. Phytoene synthase activity performed by the bifunctional enzyme carAR first produces phytoene from geranyl-geranyl pyrophosphate (GGPP). The phytoene dehydrogenase carB then introduces 4 desaturations to lead to lycopene which is substrate of the carotene cyclase activity of carAR that leads to the production of gamma-carotene. CarB then performs a 5th desaturation reaction to yield torulene. Torulene is the substrate of the dioxidase carT that breaks the molecule, removing five carbon atoms to yield beta-apo-4'-carotenal, whereas the aldehyde dehydrogenase carD mediates the last step by converting beta-apo-4'-carotenal into neurosporaxanthin. This chain is Torulene dioxygenase, found in Fusarium fujikuroi (Bakanae and foot rot disease fungus).